A 547-amino-acid polypeptide reads, in one-letter code: MRSDDVKAGYARAPNRSLIRSLGIDESEMHQPFIGIANSWNTIVPGHTHLRVLGERVREGITAGGGTPFEFNTIGICDGIAMGHEGMRYSLPSRENIADSVELMIQAHKFDGIVCICTCDKIVPGMLMAAGRCNIPAIVLTGGNMLPGNLHGCELSLTDVFEGVGKVAGGTMTEEELTELETAAMPGCGSCQGLYTANTMACMTEALGMSLPGCAATPAVYADKIRLAYRTGKRIVDLVRKQILPRDIITPASLRNAIRVDMALGGSTNTVLHLMAIATEAGVPFDLQEFNRLSEQIPHIASMMPAGPHSMQALHHAGGIPAVFRQIRSHLENCQTVSGMDIYTIADSVKYVDESVIRPEQSPVHQSGGLMILTGSLAPDGAVIKSGAVQDEMWKHTGPARVFDGEELAMKAILAREIKEGDIIVIRYEGPKGGPGMPEMLSPTSALVGLGYSRVALITDGRFSGGTRGPCIGHVAPEAAAGGPIAFVKDGDQISIDLFTKTVNLNISADEIENRKKGWKPLKRPLTGVLARYAAAVGPADLGAVLQ.

Asp-78 contributes to the Mg(2+) binding site. Cys-119 serves as a coordination point for [2Fe-2S] cluster. Positions 120 and 121 each coordinate Mg(2+). The residue at position 121 (Lys-121) is an N6-carboxylysine. [2Fe-2S] cluster is bound at residue Cys-191. Glu-439 contributes to the Mg(2+) binding site. Ser-464 serves as the catalytic Proton acceptor.

This sequence belongs to the IlvD/Edd family. Homodimer. It depends on [2Fe-2S] cluster as a cofactor. Mg(2+) is required as a cofactor.

The enzyme catalyses (2R)-2,3-dihydroxy-3-methylbutanoate = 3-methyl-2-oxobutanoate + H2O. It catalyses the reaction (2R,3R)-2,3-dihydroxy-3-methylpentanoate = (S)-3-methyl-2-oxopentanoate + H2O. Its pathway is amino-acid biosynthesis; L-isoleucine biosynthesis; L-isoleucine from 2-oxobutanoate: step 3/4. The protein operates within amino-acid biosynthesis; L-valine biosynthesis; L-valine from pyruvate: step 3/4. Functions in the biosynthesis of branched-chain amino acids. Catalyzes the dehydration of (2R,3R)-2,3-dihydroxy-3-methylpentanoate (2,3-dihydroxy-3-methylvalerate) into 2-oxo-3-methylpentanoate (2-oxo-3-methylvalerate) and of (2R)-2,3-dihydroxy-3-methylbutanoate (2,3-dihydroxyisovalerate) into 2-oxo-3-methylbutanoate (2-oxoisovalerate), the penultimate precursor to L-isoleucine and L-valine, respectively. This is Dihydroxy-acid dehydratase from Methanospirillum hungatei JF-1 (strain ATCC 27890 / DSM 864 / NBRC 100397 / JF-1).